The following is a 55-amino-acid chain: Cortexin domain containing 2 (55 aa).

Residues 16 to 36 traverse the membrane as a helical segment; it reads FAIAFVVLLFLFLIVMIFRCA.

Its subcellular location is the membrane. The protein is Cortexin domain containing 2 of Homo sapiens (Human).